The primary structure comprises 310 residues: B3 domain-containing protein At4g02870 (310 aa).

Over residues 1–21 the composition is skewed to polar residues; the sequence is MTLSDDPISPSTQESSNSSYV. A disordered region spans residues 1–39; that stretch reads MTLSDDPISPSTQESSNSSYVRSKEAEKNSPSQETDEEV. Positions 205 to 300 form a DNA-binding region, TF-B3; the sequence is RCGRLILQSS…RLQFGVISRN (96 aa).

The protein localises to the nucleus. The sequence is that of B3 domain-containing protein At4g02870 (ARF42) from Arabidopsis thaliana (Mouse-ear cress).